The sequence spans 353 residues: Uroporphyrinogen decarboxylase (353 aa).

Residues 33-37 (RQAGR), Asp-82, Tyr-158, Ser-213, and His-332 contribute to the substrate site.

It belongs to the uroporphyrinogen decarboxylase family. In terms of assembly, homodimer.

Its subcellular location is the cytoplasm. It carries out the reaction uroporphyrinogen III + 4 H(+) = coproporphyrinogen III + 4 CO2. Its pathway is porphyrin-containing compound metabolism; protoporphyrin-IX biosynthesis; coproporphyrinogen-III from 5-aminolevulinate: step 4/4. In terms of biological role, catalyzes the decarboxylation of four acetate groups of uroporphyrinogen-III to yield coproporphyrinogen-III. The sequence is that of Uroporphyrinogen decarboxylase from Gluconobacter oxydans (strain 621H) (Gluconobacter suboxydans).